Consider the following 458-residue polypeptide: Transmembrane protein 135 (458 aa).

The next 6 helical transmembrane spans lie at 68–88, 96–116, 149–169, 298–318, 331–351, and 377–397; these read ILQS…FFCI, FYSW…AILI, TLRN…MFFF, FQLG…SCFL, IVAG…TISM, and ADTI…VMEV.

The protein belongs to the TMEM135 family.

It localises to the mitochondrion membrane. The protein resides in the peroxisome membrane. In terms of biological role, involved in mitochondrial metabolism by regulating the balance between mitochondrial fusion and fission. May act as a regulator of mitochondrial fission that promotes DNM1L-dependent fission through activation of DNM1L. May be involved in peroxisome organization. This Mus musculus (Mouse) protein is Transmembrane protein 135.